A 21-amino-acid chain; its full sequence is Fibrinogen beta chain (21 aa).

Gln1 carries the post-translational modification Pyrrolidone carboxylic acid. Acidic residues predominate over residues 1-11 (QHSTDYDEEEE). The tract at residues 1-21 (QHSTDYDEEEEDRAKLHLDAR) is disordered. Thr4 carries O-linked (GalNAc...) threonine glycosylation. Tyr6 bears the Sulfotyrosine mark. Residues 12-21 (DRAKLHLDAR) show a composition bias toward basic and acidic residues.

As to quaternary structure, heterohexamer; disulfide linked. Contains 2 sets of 3 non-identical chains (alpha, beta and gamma). The 2 heterotrimers are in head to head conformation with the N-termini in a small central domain. In terms of processing, conversion of fibrinogen to fibrin is triggered by thrombin, which cleaves fibrinopeptides A and B from alpha and beta chains, and thus exposes the N-terminal polymerization sites responsible for the formation of the soft clot.

Its subcellular location is the secreted. In terms of biological role, cleaved by the protease thrombin to yield monomers which, together with fibrinogen alpha (FGA) and fibrinogen gamma (FGG), polymerize to form an insoluble fibrin matrix. Fibrin has a major function in hemostasis as one of the primary components of blood clots. In addition, functions during the early stages of wound repair to stabilize the lesion and guide cell migration during re-epithelialization. Was originally thought to be essential for platelet aggregation, based on in vitro studies using anticoagulated blood. However subsequent studies have shown that it is not absolutely required for thrombus formation in vivo. Enhances expression of SELP in activated platelets. Maternal fibrinogen is essential for successful pregnancy. Fibrin deposition is also associated with infection, where it protects against IFNG-mediated hemorrhage. May also facilitate the antibacterial immune response via both innate and T-cell mediated pathways. The protein is Fibrinogen beta chain (FGB) of Cervus elaphus (Red deer).